The chain runs to 38 residues: Photosystem II reaction center protein L (38 aa).

The chain crosses the membrane as a helical span at residues 17–37; sequence SLFWGLLLIFVLAVLFSSYFF.

This sequence belongs to the PsbL family. As to quaternary structure, PSII is composed of 1 copy each of membrane proteins PsbA, PsbB, PsbC, PsbD, PsbE, PsbF, PsbH, PsbI, PsbJ, PsbK, PsbL, PsbM, PsbT, PsbX, PsbY, PsbZ, Psb30/Ycf12, at least 3 peripheral proteins of the oxygen-evolving complex and a large number of cofactors. It forms dimeric complexes.

The protein resides in the plastid. Its subcellular location is the chloroplast thylakoid membrane. Functionally, one of the components of the core complex of photosystem II (PSII). PSII is a light-driven water:plastoquinone oxidoreductase that uses light energy to abstract electrons from H(2)O, generating O(2) and a proton gradient subsequently used for ATP formation. It consists of a core antenna complex that captures photons, and an electron transfer chain that converts photonic excitation into a charge separation. This subunit is found at the monomer-monomer interface and is required for correct PSII assembly and/or dimerization. The sequence is that of Photosystem II reaction center protein L from Porphyra purpurea (Red seaweed).